The chain runs to 317 residues: Sulfate adenylyltransferase subunit 2 (317 aa).

Disordered stretches follow at residues 1-21 (MPDS…APLD) and 298-317 (RAID…EGYF).

The protein belongs to the PAPS reductase family. CysD subfamily. As to quaternary structure, heterodimer composed of CysD, the smaller subunit, and CysN.

The enzyme catalyses sulfate + ATP + H(+) = adenosine 5'-phosphosulfate + diphosphate. Its pathway is sulfur metabolism; hydrogen sulfide biosynthesis; sulfite from sulfate: step 1/3. In terms of biological role, with CysN forms the ATP sulfurylase (ATPS) that catalyzes the adenylation of sulfate producing adenosine 5'-phosphosulfate (APS) and diphosphate, the first enzymatic step in sulfur assimilation pathway. APS synthesis involves the formation of a high-energy phosphoric-sulfuric acid anhydride bond driven by GTP hydrolysis by CysN coupled to ATP hydrolysis by CysD. The protein is Sulfate adenylyltransferase subunit 2 of Rhizobium etli (strain CIAT 652).